Here is a 321-residue protein sequence, read N- to C-terminus: Lipoyl synthase (321 aa).

Cys-68, Cys-73, Cys-79, Cys-94, Cys-98, Cys-101, and Ser-308 together coordinate [4Fe-4S] cluster. Residues 80–297 enclose the Radical SAM core domain; sequence FNHGTATFMI…KAEALAMGFT (218 aa).

It belongs to the radical SAM superfamily. Lipoyl synthase family. The cofactor is [4Fe-4S] cluster.

Its subcellular location is the cytoplasm. It catalyses the reaction [[Fe-S] cluster scaffold protein carrying a second [4Fe-4S](2+) cluster] + N(6)-octanoyl-L-lysyl-[protein] + 2 oxidized [2Fe-2S]-[ferredoxin] + 2 S-adenosyl-L-methionine + 4 H(+) = [[Fe-S] cluster scaffold protein] + N(6)-[(R)-dihydrolipoyl]-L-lysyl-[protein] + 4 Fe(3+) + 2 hydrogen sulfide + 2 5'-deoxyadenosine + 2 L-methionine + 2 reduced [2Fe-2S]-[ferredoxin]. The protein operates within protein modification; protein lipoylation via endogenous pathway; protein N(6)-(lipoyl)lysine from octanoyl-[acyl-carrier-protein]: step 2/2. Catalyzes the radical-mediated insertion of two sulfur atoms into the C-6 and C-8 positions of the octanoyl moiety bound to the lipoyl domains of lipoate-dependent enzymes, thereby converting the octanoylated domains into lipoylated derivatives. This Salmonella typhi protein is Lipoyl synthase.